Reading from the N-terminus, the 67-residue chain is Ferredoxin FdxE (67 aa).

[3Fe-4S] cluster-binding residues include Cys10, Val11, Gln15, Cys16, and Cys54.

As to quaternary structure, interacts with the cytochrome P450 143 with high affinity (Kd=84 nM). It depends on [3Fe-4S] cluster as a cofactor.

Its function is as follows. Ferredoxin that is the redox partner of cytochrome CYP143, a cytochrome P450 encoded by an adjacent gene. In Mycobacterium tuberculosis (strain ATCC 25618 / H37Rv), this protein is Ferredoxin FdxE.